Here is a 203-residue protein sequence, read N- to C-terminus: Outer-membrane lipoprotein carrier protein (203 aa).

Positions 1-21 are cleaved as a signal peptide; sequence MKKMAIACALLSSVVASSVWA. The segment at 178–203 is disordered; the sequence is QQNGAVEPSKFTFTPPQGVTIDDQRK.

This sequence belongs to the LolA family. As to quaternary structure, monomer.

It localises to the periplasm. In terms of biological role, participates in the translocation of lipoproteins from the inner membrane to the outer membrane. Only forms a complex with a lipoprotein if the residue after the N-terminal Cys is not an aspartate (The Asp acts as a targeting signal to indicate that the lipoprotein should stay in the inner membrane). The sequence is that of Outer-membrane lipoprotein carrier protein from Salmonella typhi.